The chain runs to 294 residues: Foldase protein PrsA 1 (294 aa).

The first 21 residues, 1–21 (MTKLKKVMISLVAATLLLLAG), serve as a signal peptide directing secretion. Cys-22 carries the N-palmitoyl cysteine lipid modification. The S-diacylglycerol cysteine moiety is linked to residue Cys-22. Positions 135-226 (EPNITVRHIL…YGYHLIQLVK (92 aa)) constitute a PpiC domain.

This sequence belongs to the PrsA family.

It is found in the cell membrane. It carries out the reaction [protein]-peptidylproline (omega=180) = [protein]-peptidylproline (omega=0). In terms of biological role, plays a major role in protein secretion by helping the post-translocational extracellular folding of several secreted proteins. The chain is Foldase protein PrsA 1 (prsA1) from Listeria innocua serovar 6a (strain ATCC BAA-680 / CLIP 11262).